A 146-amino-acid chain; its full sequence is Putative pre-16S rRNA nuclease (146 aa).

Belongs to the YqgF nuclease family.

The protein localises to the cytoplasm. Functionally, could be a nuclease involved in processing of the 5'-end of pre-16S rRNA. The polypeptide is Putative pre-16S rRNA nuclease (Pediococcus pentosaceus (strain ATCC 25745 / CCUG 21536 / LMG 10740 / 183-1w)).